A 491-amino-acid polypeptide reads, in one-letter code: Glucose-6-phosphate 1-dehydrogenase (491 aa).

NADP(+) contacts are provided by R51 and K150. Residues H180, K184, E218, and D237 each coordinate substrate. The Proton acceptor role is filled by H242. Residue K341 participates in substrate binding.

It belongs to the glucose-6-phosphate dehydrogenase family.

The catalysed reaction is D-glucose 6-phosphate + NADP(+) = 6-phospho-D-glucono-1,5-lactone + NADPH + H(+). Its pathway is carbohydrate degradation; pentose phosphate pathway; D-ribulose 5-phosphate from D-glucose 6-phosphate (oxidative stage): step 1/3. In terms of biological role, catalyzes the oxidation of glucose 6-phosphate to 6-phosphogluconolactone. The sequence is that of Glucose-6-phosphate 1-dehydrogenase from Rhizobium meliloti (strain 1021) (Ensifer meliloti).